A 596-amino-acid polypeptide reads, in one-letter code: Myosin light chain kinase 2, skeletal/cardiac muscle (596 aa).

Residues 1-224 (MATENGAVEL…AGQAKMQGDT (224 aa)) are disordered. Ala-2 bears the N-acetylalanine mark. The span at 40 to 63 (DPKKAPDPPTLKKDAKAPASEKGD) shows a compositional bias: basic and acidic residues. A compositionally biased stretch (low complexity) spans 88-104 (EGSAGPPAALPQQTATP). Ser-143, Ser-149, and Ser-151 each carry phosphoserine. Basic and acidic residues predominate over residues 189 to 209 (RPAKAEEGKNILAESQKEVGE). A Protein kinase domain is found at 285–540 (MNSKEALGGG…AAQCLAHPWL (256 aa)). Residues 291 to 299 (LGGGKFGAV) and Lys-314 contribute to the ATP site. Residue Asp-406 is the Proton acceptor of the active site. Position 445 is a phosphothreonine (Thr-445). The interval 574–586 (IAVSAANRFKKIS) is calmodulin-binding.

It belongs to the protein kinase superfamily. CAMK Ser/Thr protein kinase family. May interact with centrin. In terms of tissue distribution, heart and skeletal muscles. Increased expression in the apical tissue compared to the interventricular septal tissue.

The protein resides in the cytoplasm. It carries out the reaction L-seryl-[myosin light chain] + ATP = O-phospho-L-seryl-[myosin light chain] + ADP + H(+). The enzyme catalyses L-threonyl-[myosin light chain] + ATP = O-phospho-L-threonyl-[myosin light chain] + ADP + H(+). Functionally, implicated in the level of global muscle contraction and cardiac function. Phosphorylates a specific serine in the N-terminus of a myosin light chain. This is Myosin light chain kinase 2, skeletal/cardiac muscle (MYLK2) from Homo sapiens (Human).